Reading from the N-terminus, the 104-residue chain is MSNITIYHNPACGTSRNTLEMLHNNGNEPTIINYLDMPPTRDELIKLISDIFSDKIIECIREQCHLMPALSLNVIGHVDIRSIHSYLFNFNEKVSPSHGFIKNG.

Residue cysteine 12 is part of the active site.

It belongs to the ArsC family.

It catalyses the reaction [glutaredoxin]-dithiol + arsenate + glutathione + H(+) = glutathionyl-S-S-[glutaredoxin] + arsenite + H2O. Functionally, reduction of arsenate [As(V)] to arsenite [As(III)]. This protein expands the substrate specificity of ArsAB pump which can extrude arsenite and antimonite to allow for arsenate pumping and resistance. This is Putative arsenate reductase (yfjU) from Escherichia coli (strain K12).